Here is a 360-residue protein sequence, read N- to C-terminus: F-box protein SKP2B (360 aa).

One can recognise an F-box domain in the interval 25-76 (ISEWKDIPVELLMKILNLVDDRTVIIASCICSGWRDAVSLGLTRLSLSWCKK). LRR repeat units follow at residues 77 to 99 (NMNS…VLRQ), 101 to 126 (KPQL…DLSK), 127 to 152 (SSKI…NLSG), 153 to 178 (CTSF…NLCG), 180 to 205 (VEAV…NLGW), 206 to 231 (CENI…DLCS), 232 to 257 (CVLI…GLYY), 258 to 301 (CRNI…NISQ), and 302 to 333 (CTYL…VMSG).

In terms of biological role, component of SCF(SKP2B) E3 ubiquitin ligase complexes, which mediate the ubiquitination and subsequent proteasomal degradation of the cyclin-dependent kinase inhibitor KRP1. Does not interact with auxin. This Arabidopsis thaliana (Mouse-ear cress) protein is F-box protein SKP2B (SKP2B).